The following is a 205-amino-acid chain: N-(5'-phosphoribosyl)anthranilate isomerase (205 aa).

Belongs to the TrpF family.

It carries out the reaction N-(5-phospho-beta-D-ribosyl)anthranilate = 1-(2-carboxyphenylamino)-1-deoxy-D-ribulose 5-phosphate. It functions in the pathway amino-acid biosynthesis; L-tryptophan biosynthesis; L-tryptophan from chorismate: step 3/5. The protein is N-(5'-phosphoribosyl)anthranilate isomerase of Clostridium acetobutylicum (strain ATCC 824 / DSM 792 / JCM 1419 / IAM 19013 / LMG 5710 / NBRC 13948 / NRRL B-527 / VKM B-1787 / 2291 / W).